We begin with the raw amino-acid sequence, 291 residues long: Polyamine aminopropyltransferase (291 aa).

A PABS domain is found at 5 to 245 (PGPIVLMEPL…YAVNFVLGSL (241 aa)). Glutamine 36 contacts S-methyl-5'-thioadenosine. The spermidine site is built by histidine 67 and glutamate 91. Residues aspartate 111 and 143–144 (DG) each bind S-methyl-5'-thioadenosine. The active-site Proton acceptor is aspartate 164.

The protein belongs to the spermidine/spermine synthase family. Homodimer or homotetramer.

It is found in the cytoplasm. The catalysed reaction is norspermidine + S-adenosyl 3-(methylsulfanyl)propylamine = norspermine + S-methyl-5'-thioadenosine + H(+). It carries out the reaction S-adenosyl 3-(methylsulfanyl)propylamine + spermidine = thermospermine + S-methyl-5'-thioadenosine + H(+). Its function is as follows. Involved in the biosynthesis of polyamines which are thought to support the growth of thermophilic microorganisms under high-temperature conditions. It seems that long-chain and branched-chain of polyamines effectively stabilize DNA and RNA, respectively. Catalyzes the irreversible transfer of a propylamine group from the amino donor S-adenosylmethioninamine (decarboxy-AdoMet) to norspermidine and 1,3-diaminopropane to yield norspermine, and to spermidine to yield thermospermine. It can also synthesize thermospermine from putrescine (1,4-diaminobutane) and caldopentamine from norspermine with a very low activity. The biosynthesis of caldohexamine and caldoheptamine from caldopentamine has been also observed. This Pyrobaculum aerophilum (strain ATCC 51768 / DSM 7523 / JCM 9630 / CIP 104966 / NBRC 100827 / IM2) protein is Polyamine aminopropyltransferase.